The following is a 394-amino-acid chain: Putative 8-amino-7-oxononanoate synthase (394 aa).

Arg21 provides a ligand contact to substrate. 107–108 (GY) lines the pyridoxal 5'-phosphate pocket. His132 serves as a coordination point for substrate. Pyridoxal 5'-phosphate contacts are provided by residues Ser180, 205–208 (DEAH), and 236–239 (TLSK). Residue Lys239 is modified to N6-(pyridoxal phosphate)lysine. Thr361 provides a ligand contact to substrate.

This sequence belongs to the class-II pyridoxal-phosphate-dependent aminotransferase family. BioF subfamily. In terms of assembly, homodimer. Requires pyridoxal 5'-phosphate as cofactor.

The catalysed reaction is 6-carboxyhexanoyl-[ACP] + L-alanine + H(+) = (8S)-8-amino-7-oxononanoate + holo-[ACP] + CO2. The protein operates within cofactor biosynthesis; biotin biosynthesis. Functionally, catalyzes the decarboxylative condensation of pimeloyl-[acyl-carrier protein] and L-alanine to produce 8-amino-7-oxononanoate (AON), [acyl-carrier protein], and carbon dioxide. The polypeptide is Putative 8-amino-7-oxononanoate synthase (bioF) (Acaryochloris marina (strain MBIC 11017)).